We begin with the raw amino-acid sequence, 316 residues long: Probable cell division protein WhiA (316 aa).

Residues Ser-276–Lys-309 constitute a DNA-binding region (H-T-H motif).

It belongs to the WhiA family.

Involved in cell division and chromosome segregation. This chain is Probable cell division protein WhiA, found in Bifidobacterium longum (strain NCC 2705).